The primary structure comprises 377 residues: Alanine racemase (377 aa).

Lys-39 serves as the catalytic Proton acceptor; specific for D-alanine. Lys-39 bears the N6-(pyridoxal phosphate)lysine mark. Arg-137 provides a ligand contact to substrate. Tyr-266 (proton acceptor; specific for L-alanine) is an active-site residue. Met-314 lines the substrate pocket.

Belongs to the alanine racemase family. Pyridoxal 5'-phosphate serves as cofactor.

It catalyses the reaction L-alanine = D-alanine. The protein operates within amino-acid biosynthesis; D-alanine biosynthesis; D-alanine from L-alanine: step 1/1. Functionally, catalyzes the interconversion of L-alanine and D-alanine. May also act on other amino acids. This chain is Alanine racemase (alr), found in Symbiobacterium thermophilum (strain DSM 24528 / JCM 14929 / IAM 14863 / T).